A 426-amino-acid chain; its full sequence is Glutamate-1-semialdehyde 2,1-aminomutase (426 aa).

N6-(pyridoxal phosphate)lysine is present on K265.

It belongs to the class-III pyridoxal-phosphate-dependent aminotransferase family. HemL subfamily. As to quaternary structure, homodimer. The cofactor is pyridoxal 5'-phosphate.

Its subcellular location is the cytoplasm. It catalyses the reaction (S)-4-amino-5-oxopentanoate = 5-aminolevulinate. It participates in porphyrin-containing compound metabolism; protoporphyrin-IX biosynthesis; 5-aminolevulinate from L-glutamyl-tRNA(Glu): step 2/2. The protein is Glutamate-1-semialdehyde 2,1-aminomutase of Actinobacillus pleuropneumoniae serotype 7 (strain AP76).